The sequence spans 592 residues: MRGRDLCSSTQSQALGSLRTTTPAFTLNIPSEANHTEQPPAGLGARLQEAGVSIPPRRGRPTPTLEKKKKPHLMAEDEPSGALLKPLVFRVDETTPAVVQSVLLERGWNKFDKQEQNAEDWNLYWRTSSFRMTEHNSVKPWQQLNHHPGTTKLTRKDCLAKHLKHMRRMYGTSLYQFIPLTFVMPNDYTKFVAEYFQERQMLGTKHSYWICKPAELSRGRGILIFSDFKDFIFDDMYIVQKYISNPLLIGRYKCDLRIYVCVTGFKPLTIYVYQEGLVRFATEKFDLSNLQNNYAHLTNSSINKSGASYEKIKEVIGHGCKWTLSRFFSYLRSWDVDDLLLWKKIHRMVILTILAIAPSVPFAANCFELFGFDILIDDNLKPWLLEVNYSPALTLDCSTDVLVKRKLVHDIIDLIYLNGLRNEGREASNATHGNSNIDAAKSDRGGLDAPDCLPYDSLSFTSRMYNEDDSVVEKAVSVRPEAAPASQLEGEMSGQDFHLSTREMPQSKPKLRSRHTPHKTLMPYASLFQSHSCKTKTSPCVLSDRGKAPDPQAGNFVLVFPFNEATLGASRNGLNVKRIIQELQKLMNKQHS.

2 disordered regions span residues 1 to 23 and 51 to 77; these read MRGR…TTTP and GVSI…MAED. Positions 7–23 are enriched in polar residues; that stretch reads CSSTQSQALGSLRTTTP. Residues 84–427 enclose the TTL domain; that stretch reads LKPLVFRVDE…NGLRNEGREA (344 aa). Residues lysine 212, 218–219, 240–243, and 253–255 each bind ATP; these read RG, QKYI, and KCD. Residue arginine 218 coordinates a protein. Arginine 279 contributes to the L-glutamate binding site. Position 298 to 299 (298 to 299) interacts with ATP; that stretch reads TN. 2 residues coordinate L-glutamate: serine 301 and lysine 321. 3 residues coordinate Mg(2+): aspartate 373, glutamate 386, and asparagine 388. Residue lysine 404 coordinates L-glutamate.

The protein belongs to the tubulin--tyrosine ligase family. Mg(2+) is required as a cofactor. Testis.

In terms of biological role, probable tubulin polyglutamylase that generates side chains of glutamate on the gamma-carboxyl group of specific glutamate residues within the C-terminal tail of target proteins. Similar to TTLL1, may acquire enzymatic activity only in complex with other proteins as it is most likely lacking domains important for autonomous activity. Probably involved in the side-chain initiation step of the polyglutamylation reaction rather than the elongation step. In Homo sapiens (Human), this protein is Probable tubulin polyglutamylase TTLL2.